The sequence spans 361 residues: Spermidine/putrescine import ATP-binding protein PotA (361 aa).

The 235-residue stretch at 7–241 folds into the ABC transporter domain; that stretch reads IEVRNVSKRY…PQHRFVAQFI (235 aa). 43–50 lines the ATP pocket; that stretch reads GPSGCGKT.

This sequence belongs to the ABC transporter superfamily. Spermidine/putrescine importer (TC 3.A.1.11.1) family. As to quaternary structure, the complex is composed of two ATP-binding proteins (PotA), two transmembrane proteins (PotB and PotC) and a solute-binding protein (PotD).

It is found in the cell inner membrane. It carries out the reaction ATP + H2O + polyamine-[polyamine-binding protein]Side 1 = ADP + phosphate + polyamineSide 2 + [polyamine-binding protein]Side 1.. Functionally, part of the ABC transporter complex PotABCD involved in spermidine/putrescine import. Responsible for energy coupling to the transport system. The chain is Spermidine/putrescine import ATP-binding protein PotA from Pseudomonas fluorescens (strain Pf0-1).